A 266-amino-acid chain; its full sequence is Chymotrypsin-like elastase family member 1 (266 aa).

Residues 1 to 16 (MLRFLVLATLVLYGHS) form the signal peptide. A propeptide spans 17–26 (TRDFPETNAR) (activation peptide). Positions 27-264 (VVGGTEARKN…YISWINNVIA (238 aa)) constitute a Peptidase S1 domain. Cys56 and Cys72 are disulfide-bonded. His71 acts as the Charge relay system in catalysis. Residues Glu85, Asn87, Gln90, and Glu95 each contribute to the Ca(2+) site. Asn87 is a glycosylation site (N-linked (GlcNAc...) asparagine). Asp119 serves as the catalytic Charge relay system. 3 cysteine pairs are disulfide-bonded: Cys153/Cys220, Cys184/Cys200, and Cys210/Cys240. The active-site Charge relay system is Ser214. Asn241 is a glycosylation site (N-linked (GlcNAc...) asparagine).

Belongs to the peptidase S1 family. Elastase subfamily. It depends on Ca(2+) as a cofactor.

The protein resides in the secreted. It carries out the reaction Hydrolysis of proteins, including elastin. Preferential cleavage: Ala-|-Xaa.. Serine proteases that hydrolyze many proteins in addition to elastin. The sequence is that of Chymotrypsin-like elastase family member 1 (CELA1) from Felis catus (Cat).